Consider the following 136-residue polypeptide: Flagellar assembly factor FliW 2 (136 aa).

This sequence belongs to the FliW family. In terms of assembly, interacts with translational regulator CsrA and flagellin(s).

It is found in the cytoplasm. Acts as an anti-CsrA protein, binds CsrA and prevents it from repressing translation of its target genes, one of which is flagellin. Binds to flagellin and participates in the assembly of the flagellum. The chain is Flagellar assembly factor FliW 2 from Wolinella succinogenes (strain ATCC 29543 / DSM 1740 / CCUG 13145 / JCM 31913 / LMG 7466 / NCTC 11488 / FDC 602W) (Vibrio succinogenes).